The chain runs to 980 residues: MALAVLRVLEPFPTETPPLAVLLPPGGPWPAAELGLVLALRPAGESPAGPALLVAALEGPDAGTEEQGPGPPQLLVSRALLRLLALGSGAWVRARAVRRPPALGWALLGTSLGPGLGPRVGPLLVRRGETLPVPGPRVLETRPALQGLLGPGTRLAVTELRGRARLCPESGDSSRPPPPPVVSSFAVSGTVRRLQGVLGGTGDSLGVSRSCLRGLGLFQGEWVWVAQARESSNTSQPHLARVQVLEPRWDLSDRLGPGSGPLGEPLADGLALVPATLAFNLGCDPLEMGELRIQRYLEGSIAPEDKGSCSLLPGPPFARELHIEIVSSPHYSTNGNYDGVLYRHFQIPRVVQEGDVLCVPTIGQVEILEGSPEKLPRWREMFFKVKKTVGEAPDGPASAYLADTTHTSLYMVGSTLSPVPWLPSEESTLWSSLSPPGLEALVSELCAVLKPRLQPGGALLTGTSSVLLRGPPGCGKTTVVAAACSHLGLHLLKVPCSSLCAESSGAVETKLQAIFSRARRCRPAVLLLTAVDLLGRDRDGLGEDARVMAVLRHLLLNEDPLNSCPPLMVVATTSRAQDLPADVQTAFPHELEVPALSEGQRLSILRALTAHLPLGQEVNLAQLARRCAGFVVGDLYALLTHSSRAACTRIKNSGLAGGLTEEDEGELCAAGFPLLAEDFGQALEQLQTAHSQAVGAPKIPSVSWHDVGGLQEVKKEILETIQLPLEHPELLSLGLRRSGLLLHGPPGTGKTLLAKAVATECSLTFLSVKGPELINMYVGQSEENVREVFARARAAAPCIIFFDELDSLAPSRGRSGDSGGVMDRVVSQLLAELDGLHSTQDVFVIGATNRPDLLDPALLRPGRFDKLVFVGANEDRASQLRVLSAITRKFKLEPSVSLVNVLDCCPPQLTGADLYSLCSDAMTAALKRRVHDLEEGLEPGSSALMLTMEDLLQAAARLQPSVSEQELLRYKRIQRKFAAC.

Arg119 is subject to Omega-N-methylarginine. Residues 470 to 477 (GPPGCGKT) and 744 to 751 (GPPGTGKT) contribute to the ATP site.

Belongs to the AAA ATPase family. As to quaternary structure, interacts with PEX1; forming the PEX1-PEX6 AAA ATPase complex, which is composed of a heterohexamer formed by a trimer of PEX1-PEX6 dimers. Interacts with PEX26; interaction is direct and promotes recruitment to peroxisomal membranes. Interacts with ZFAND6. Expressed in the retina, at higher levels in the photoreceptor layer at the joint between the outer and inner segments.

The protein localises to the cytoplasm. Its subcellular location is the cytosol. The protein resides in the peroxisome membrane. It localises to the cell projection. It is found in the cilium. The protein localises to the photoreceptor outer segment. The catalysed reaction is ATP + H2O = ADP + phosphate + H(+). In terms of biological role, component of the PEX1-PEX6 AAA ATPase complex, a protein dislocase complex that mediates the ATP-dependent extraction of the PEX5 receptor from peroxisomal membranes, an essential step for PEX5 recycling. Specifically recognizes PEX5 monoubiquitinated at 'Cys-11', and pulls it out of the peroxisome lumen through the PEX2-PEX10-PEX12 retrotranslocation channel. Extraction by the PEX1-PEX6 AAA ATPase complex is accompanied by unfolding of the TPR repeats and release of bound cargo from PEX5. This chain is Peroxisomal ATPase PEX6, found in Homo sapiens (Human).